Consider the following 1080-residue polypeptide: Adenylate cyclase type 7 (1080 aa).

At 1–33 (MPAKGRYFLNEGEEGPDQDALYEKYQLTSQHGP) the chain is on the cytoplasmic side. The next 6 helical transmembrane spans lie at 34-54 (LLLT…IIAF), 63-83 (QAIL…SVLM), 95-117 (ALAL…DAWT), 122-142 (AWEQ…LLPF), 147-167 (AVAV…SLMG), and 176-196 (VGLQ…TGAF). Topologically, residues 197–594 (HKHQMQDASR…YRLAPIPRAR (398 aa)) are cytoplasmic. The 128-residue stretch at 279–406 (SILYADIVGF…HDVSLANRME (128 aa)) folds into the Guanylate cyclase 1 domain. Asp284, Ile285, and Asp328 together coordinate Mg(2+). ATP is bound by residues 284–289 (DIVGFT), 326–328 (LGD), and Arg372. The interval 454–474 (DPRSQQPPPPSQHLPRPKGDA) is disordered. Positions 477–482 (KMRASV) are mediates regulation of adenylate cyclase activity by C5 alpha-induced G- beta and gamma pathway. A mediates regulation of adenylate cyclase activity by sphingosine 1-phosphate-induced G alpha 13 pathway region spans residues 491–499 (WGAARPFAH). Residues 504 to 546 (ESVSSGETHVPNGRRPKSVPQRHRRTPDRSMSPKGRSEDDSYD) are disordered. The tract at residues 506–584 (VSSGETHVPN…IFLEKGFERE (79 aa)) is modulates adenylate cyclase activity by modulating the binding of G(s)alpha to the high-affinity G(s)alpha binding site in 7C1a/7C2. The span at 515-529 (NGRRPKSVPQRHRRT) shows a compositional bias: basic residues. A run of 3 helical transmembrane segments spans residues 595–615 (HDFA…VLLM), 620–640 (ALGV…GLCF), and 669–688 (LTLA…INLP). An N-linked (GlcNAc...) asparagine glycan is attached at Asn701. Transmembrane regions (helical) follow at residues 718 to 737 (PLPY…SVFL) and 746 to 773 (VLLT…CGQG). Residues Asn776 and Asn781 are each glycosylated (N-linked (GlcNAc...) asparagine). A helical membrane pass occupies residues 794–814 (DLKTMTNFYLVLFYITLLTLS). Topologically, residues 815–1080 (RQIDYYCRLD…TAKFQGLGLN (266 aa)) are cytoplasmic. The 145-residue stretch at 879 to 1023 (CVMFASVPDF…NTVNVASRME (145 aa)) folds into the Guanylate cyclase 2 domain. Residues Lys931, 1010–1012 (DIW), 1017–1021 (NVASR), and Lys1057 each bind ATP.

It belongs to the adenylyl cyclase class-4/guanylyl cyclase family. Mg(2+) serves as cofactor. The cofactor is Mn(2+). Post-translationally, phosphorylated by PRKCD.

It localises to the membrane. The enzyme catalyses ATP = 3',5'-cyclic AMP + diphosphate. With respect to regulation, activated by the G protein alpha subunit. Activated by the G protein beta and gamma subunit complex. Activated by GNA13 and GNA12. Ethanol and phorbol 12,13-dibutanoate significantly potentiate adenylate cyclase activity generated in response to the activation of the prostanoid receptor by the agonist prostaglandin E1(1-) in a PKC-dependent manner. Inhibited by lithium. In terms of biological role, catalyzes the formation of cAMP in response to activation of G protein-coupled receptors. Functions in signaling cascades activated namely by thrombin and sphingosine 1-phosphate and mediates regulation of cAMP synthesis through synergistic action of the stimulatory G alpha protein with GNA13. Also, during inflammation, mediates zymosan-induced increase intracellular cAMP, leading to protein kinase A pathway activation in order to modulate innate immune responses through heterotrimeric G proteins G(12/13). Functions in signaling cascades activated namely by dopamine and C5 alpha chain and mediates regulation of cAMP synthesis through synergistic action of the stimulatory G protein with G beta:gamma complex. Functions, through cAMP response regulation, to keep inflammation under control during bacterial infection by sensing the presence of serum factors, such as the bioactive lysophospholipid (LPA) that regulate LPS-induced TNF-alpha production. However, it is also required for the optimal functions of B and T cells during adaptive immune responses by regulating cAMP synthesis in both B and T cells. The protein is Adenylate cyclase type 7 of Homo sapiens (Human).